A 685-amino-acid chain; its full sequence is Stromal interaction molecule 1 (685 aa).

Positions 1–22 (MDVCVRLALWLLWGLLLHQGQS) are cleaved as a signal peptide. Residues 23–213 (LSHSHSEKAT…LLTRHNHLKD (191 aa)) are Extracellular-facing. EF-hand domains lie at 64–97 (SFEAVRNIHKLMDDDANGDVDVEESDEFLREDLN) and 102–126 (TVKHSTFHGEDKLISVEDLWKAWKS). Ca(2+)-binding residues include Asp-76, Asp-78, Asn-80, Asp-82, and Glu-87. N-linked (GlcNAc...) asparagine glycosylation is found at Asn-131 and Asn-171. Residues 132-200 (WTVDEVVQWL…QLKALDTVLF (69 aa)) enclose the SAM domain. Residues 214–234 (FMLVVSIVIGVGGCWFAYIQN) traverse the membrane as a helical segment. Residues 235 to 685 (RYSKEHMKKM…LKIFKKPLKK (451 aa)) are Cytoplasmic-facing. Residues 248 to 442 (LEGLHRAEQS…IEILCGFQIV (195 aa)) adopt a coiled-coil conformation. Phosphoserine is present on Ser-257. The SOAR/CAD stretch occupies residues 344 to 442 (PEALQKWLQL…IEILCGFQIV (99 aa)). Positions 475–483 (DDVDDMDEE) are contributes to fast Ca(2+)-dependent inactivation of CRAC channels. Low complexity predominate over residues 490–499 (MQSPSLQSSV). Residues 490–542 (MQSPSLQSSVRQRLTEPQHGLGSQRDLTHSDSESSLHMSDRQRVAPKPPQMSR) form a disordered region. Phosphothreonine is present on Thr-504. Ser-512 carries the post-translational modification Phosphoserine. Positions 515–532 (DLTHSDSESSLHMSDRQR) are enriched in basic and acidic residues. At Thr-517 the chain carries Phosphothreonine. Ser-519, Ser-521, Ser-523, Ser-524, Ser-567, Ser-575, Ser-602, Ser-608, Ser-618, Ser-621, and Ser-628 each carry phosphoserine. Residues 596 to 685 (LMELSPSAPP…LKIFKKPLKK (90 aa)) are disordered. Residues 608–620 (SPHLDSSRSHSPS) are compositionally biased toward low complexity. The short motif at 642–645 (TRIP) is the Microtubule tip localization signal element. Residues 655–666 (EEDNGSIGEETD) show a composition bias toward acidic residues. Ser-660 carries the phosphoserine modification. At Thr-665 the chain carries Phosphothreonine. Ser-668 is modified (phosphoserine). The span at 670–685 (GRKKFPLKIFKKPLKK) shows a compositional bias: basic residues. The segment at 672 to 685 (KKFPLKIFKKPLKK) is required for generation of inwardly rectifying CRAC currents.

In terms of assembly, monomer in the presence of Ca(2+); it oligomerizes in absence of Ca(2+). Forms homooligomers and heterooligomers with STIM2. Interacts with pore-forming subunits of CRAC channels, ORAI1, ORAI2 and ORAI3; this interaction is potentiated upon Ca(2+) store depletion. Interacts (via the transmembrane region and the SOAR/CAD domain) with SPPL3; the interaction promotes the binding of STIM1 to ORAI1. Interacts (via the SOAR/CAD domain) with ORAI1. Interacts with MAPRE1; probably required for targeting to the growing microtubule plus ends. Interacts with CRACR2A/EFCAB4B; the interaction is direct and takes place in absence of Ca(2+). Forms a complex with CRACR2A/EFCAB4B and ORAI1 at low concentration of Ca(2+), the complex dissociates at elevated Ca(2+) concentrations. Interacts with SARAF, promoting a slow inactivation of STIM1-dependent SOCE activity, possibly by facilitating the deoligomerization of STIM1. Interacts with EFHB; the interaction takes place upon Ca(2+)-store depletion and inhibits the association with SARAF. Interacts with ASPH (isoform 8). Interacts with SLC35G1; intracellular Ca(2+)-dependent. May interact with ATP1A1, ATP2A2, ATP2B1, ATP2B4, KPNB1 and XPO1; through SLC35G1. Interacts with TMEM203. Interacts with STIMATE, promoting STIM1 conformational switch. Interacts with TMEM178A. Interacts with CASQ1 (via C-terminal end and preferentially with the monomeric form); this interaction increases in response to a depletion of intracellular Ca(2+), decreases both STIM1 aggregation and clustering, interaction of STIM1 with ORAI1 and store-operated Ca(2+) entry (SOCE) activity. Interacts with ADCY8. Glycosylation is required for cell surface expression. In terms of processing, phosphorylated predominantly on Ser residues. As to expression, ubiquitously expressed in various human primary cells and tumor cell lines.

The protein resides in the cell membrane. The protein localises to the endoplasmic reticulum membrane. Its subcellular location is the cytoplasm. It is found in the cytoskeleton. It localises to the sarcoplasmic reticulum. In terms of biological role, acts as a Ca(2+) sensor that gates two major inward rectifying Ca(2+) channels at the plasma membrane: Ca(2+) release-activated Ca(2+) (CRAC) channels and arachidonate-regulated Ca(2+)-selective (ARC) channels. Plays a role in mediating store-operated Ca(2+) entry (SOCE), a Ca(2+) influx following depletion of intracellular Ca(2+) stores. Upon Ca(2+) depletion, translocates from the endoplasmic reticulum to the plasma membrane where it activates CRAC channel pore-forming subunits ORA1, ORA2 and ORAI3 to generate sustained and oscillatory Ca(2+) entry. Involved in enamel formation. This Homo sapiens (Human) protein is Stromal interaction molecule 1 (STIM1).